A 358-amino-acid polypeptide reads, in one-letter code: Naringenin,2-oxoglutarate 3-dioxygenase (358 aa).

The 105-residue stretch at Cys190–Pro294 folds into the Fe2OG dioxygenase domain. Positions 217, 219, and 275 each coordinate Fe cation. Arg285 provides a ligand contact to 2-oxoglutarate.

Belongs to the iron/ascorbate-dependent oxidoreductase family. As to quaternary structure, interacts with Dihydroflavonol-4-reductase (TT3), chalcone synthase (TT4) and chalcone isomerase (TT5) to form a flavonoid enzyme complex. Fe(2+) serves as cofactor. The cofactor is L-ascorbate.

The enzyme catalyses a (2S)-flavan-4-one + 2-oxoglutarate + O2 = a (2R,3R)-dihydroflavonol + succinate + CO2. Its pathway is secondary metabolite biosynthesis; flavonoid biosynthesis. Catalyzes the 3-beta-hydroxylation of 2S-flavanones to 2R,3R-dihydroflavonols which are intermediates in the biosynthesis of flavonols, anthocyanidins, catechins and proanthocyanidins in plants. The chain is Naringenin,2-oxoglutarate 3-dioxygenase (F3H) from Arabidopsis thaliana (Mouse-ear cress).